Reading from the N-terminus, the 149-residue chain is 3-hydroxyacyl-[acyl-carrier-protein] dehydratase FabZ (149 aa).

H49 is a catalytic residue.

This sequence belongs to the thioester dehydratase family. FabZ subfamily.

The protein localises to the cytoplasm. The enzyme catalyses a (3R)-hydroxyacyl-[ACP] = a (2E)-enoyl-[ACP] + H2O. Its function is as follows. Involved in unsaturated fatty acids biosynthesis. Catalyzes the dehydration of short chain beta-hydroxyacyl-ACPs and long chain saturated and unsaturated beta-hydroxyacyl-ACPs. The sequence is that of 3-hydroxyacyl-[acyl-carrier-protein] dehydratase FabZ from Sulfurimonas denitrificans (strain ATCC 33889 / DSM 1251) (Thiomicrospira denitrificans (strain ATCC 33889 / DSM 1251)).